Here is a 145-residue protein sequence, read N- to C-terminus: Protein AggB (145 aa).

Residues 1–24 (MLKKSILPMSCGVLVMVMSGLLDA) form the signal peptide.

To E.coli AfaD.

The polypeptide is Protein AggB (aggB) (Escherichia coli).